Here is a 314-residue protein sequence, read N- to C-terminus: Methionyl-tRNA formyltransferase (314 aa).

A (6S)-5,6,7,8-tetrahydrofolate-binding site is contributed by 110-113; sequence SLLP.

It belongs to the Fmt family.

The catalysed reaction is L-methionyl-tRNA(fMet) + (6R)-10-formyltetrahydrofolate = N-formyl-L-methionyl-tRNA(fMet) + (6S)-5,6,7,8-tetrahydrofolate + H(+). In terms of biological role, attaches a formyl group to the free amino group of methionyl-tRNA(fMet). The formyl group appears to play a dual role in the initiator identity of N-formylmethionyl-tRNA by promoting its recognition by IF2 and preventing the misappropriation of this tRNA by the elongation apparatus. This is Methionyl-tRNA formyltransferase from Bacillus thuringiensis subsp. konkukian (strain 97-27).